A 1210-amino-acid polypeptide reads, in one-letter code: Inner capsid protein VP3 (1210 aa).

The tract at residues 1–28 (MPRTSRNVRATEVATTAIPPSNAATDTT) is disordered. A C2H2-type zinc finger spans residues 113–136 (LRCQQCGAKFSSMTQLAEHVRTEH). Positions 294–319 (PHAGPQVRSVQSQDQQVYSVDSGPDP) are disordered. Positions 299 to 315 (QVRSVQSQDQQVYSVDS) are enriched in low complexity.

It belongs to the turreted BTV-fold inner capsid family. As to quaternary structure, homodecamer; each decamer is made up of two conformers of VP2, called VP2A and VP2B. 12 homodecamers assemble to form an icosahedral capsid. Interacts with VP6.

It localises to the virion. Inner capsid protein that self-assembles to form an icosahedral capsid with a T=2 symmetry, which consists of 120 copies of VP2, with channels at each of its five-fold vertices. This capsid constitutes the innermost concentric layer of the viral mature particle. This chain is Inner capsid protein VP3 (S3), found in Aquareovirus A (isolate Chum salmon/Japan/CSRV/1981) (AQRV-A).